The following is a 356-amino-acid chain: Phosphate acyltransferase (356 aa).

The protein belongs to the PlsX family. Homodimer. Probably interacts with PlsY.

It localises to the cytoplasm. It carries out the reaction a fatty acyl-[ACP] + phosphate = an acyl phosphate + holo-[ACP]. The protein operates within lipid metabolism; phospholipid metabolism. Functionally, catalyzes the reversible formation of acyl-phosphate (acyl-PO(4)) from acyl-[acyl-carrier-protein] (acyl-ACP). This enzyme utilizes acyl-ACP as fatty acyl donor, but not acyl-CoA. In Shigella boydii serotype 4 (strain Sb227), this protein is Phosphate acyltransferase.